A 226-amino-acid polypeptide reads, in one-letter code: Glycerol-3-phosphate acyltransferase (226 aa).

6 helical membrane passes run 1–21 (MGLW…LGSF), 56–76 (GPGA…IALV), 102–122 (LVTL…FLGF), 134–154 (ILLA…AVVV), 159–178 (IVSL…MVVL), and 182–197 (LPYI…YVIL).

It belongs to the PlsY family. As to quaternary structure, probably interacts with PlsX.

The protein resides in the cell inner membrane. The catalysed reaction is an acyl phosphate + sn-glycerol 3-phosphate = a 1-acyl-sn-glycero-3-phosphate + phosphate. It functions in the pathway lipid metabolism; phospholipid metabolism. Its function is as follows. Catalyzes the transfer of an acyl group from acyl-phosphate (acyl-PO(4)) to glycerol-3-phosphate (G3P) to form lysophosphatidic acid (LPA). This enzyme utilizes acyl-phosphate as fatty acyl donor, but not acyl-CoA or acyl-ACP. The chain is Glycerol-3-phosphate acyltransferase from Trichormus variabilis (strain ATCC 29413 / PCC 7937) (Anabaena variabilis).